A 78-amino-acid polypeptide reads, in one-letter code: Sperm-specific protein Phi-0 (78 aa).

Composition is skewed to basic residues over residues 1 to 21 (MVAR…RSAA), 31 to 57 (AASR…KPKA), and 64 to 78 (VRRR…SVSK). The segment at 1–78 (MVARRQTKKA…RRIRRASVSK (78 aa)) is disordered.

The protein localises to the nucleus. It localises to the chromosome. Functionally, involved in nuclear basic protein transition: histones are replaced by spermatid specific proteins which are themselves replaced by protamines in late spermatids. This is Sperm-specific protein Phi-0 from Holothuria tubulosa (Tubular sea cucumber).